The primary structure comprises 348 residues: S-adenosylmethionine:tRNA ribosyltransferase-isomerase (348 aa).

It belongs to the QueA family. Monomer.

Its subcellular location is the cytoplasm. It carries out the reaction 7-aminomethyl-7-carbaguanosine(34) in tRNA + S-adenosyl-L-methionine = epoxyqueuosine(34) in tRNA + adenine + L-methionine + 2 H(+). Its pathway is tRNA modification; tRNA-queuosine biosynthesis. Its function is as follows. Transfers and isomerizes the ribose moiety from AdoMet to the 7-aminomethyl group of 7-deazaguanine (preQ1-tRNA) to give epoxyqueuosine (oQ-tRNA). This chain is S-adenosylmethionine:tRNA ribosyltransferase-isomerase, found in Tolumonas auensis (strain DSM 9187 / NBRC 110442 / TA 4).